A 580-amino-acid chain; its full sequence is Putative monoterpene synthase 8 (580 aa).

A chloroplast-targeting transit peptide spans 1-44 (MACTSNLSSLSKSWAVLDVPRGAPKATGLWLKRQFIFKTSRICM). Residues Asp333, Asp337, Asp478, Thr482, and Glu486 each coordinate Mg(2+). The DDXXD motif motif lies at 333–337 (DDIFD).

It belongs to the terpene synthase family. Tpsg subfamily. As to quaternary structure, monomer. Mg(2+) serves as cofactor. The cofactor is Mn(2+). In terms of tissue distribution, confined to flowers.

The protein localises to the plastid. It localises to the chloroplast. It functions in the pathway secondary metabolite biosynthesis; terpenoid biosynthesis. Its function is as follows. Monoterpene synthase (mono-TPS) involved in the biosynthesis of monoterpenes natural products, constituent of coffee beverage aroma. In Coffea arabica (Arabian coffee), this protein is Putative monoterpene synthase 8.